The following is a 190-amino-acid chain: MTAVGVQAQRPLGQRQPRRSFFESFIRTLIITCVALAVVLSSVSICDGHWLLAEDRLFGLWHFCTTTNQTICFRDLGQAHVPGLAVGMGLVRSVGALAVVAAIFGLEFLMVSQLCEDKHSQCKWVMGSILLLVSFVLSSGGLLGFVILLRNQVTLIGFTLMFWCEFTASFLLFLNAISGLHINSITHPWE.

4 helical membrane passes run 25–45, 96–116, 131–151, and 155–175; these read FIRTLIITCVALAVVLSSVSI, ALAVVAAIFGLEFLMVSQLCE, LLVSFVLSSGGLLGFVILLRN, and LIGFTLMFWCEFTASFLLFLN.

This sequence belongs to the PMP-22/EMP/MP20 family. CACNG subfamily. The L-type calcium channel is composed of five subunits: alpha-1, alpha-2/delta, beta and gamma.

It localises to the membrane. In terms of biological role, thought to stabilize the calcium channel in an inactivated (closed) state. Modulates calcium current when coexpressed with CACNA1G. This chain is Voltage-dependent calcium channel gamma-like subunit, found in Homo sapiens (Human).